The chain runs to 160 residues: Surface-adhesin protein E (160 aa).

Positions 1–15 (MKKIILTLSLGLLTA) are cleaved as a signal peptide. A lipid anchor (N-palmitoyl cysteine) is attached at Cys16. A lipid anchor (S-diacylglycerol cysteine) is attached at Cys16.

It is found in the cell outer membrane. It localises to the cell surface. Acts as a multifunctional adhesin involved in direct interactions with host epithelial cells and host proteins. The protein is Surface-adhesin protein E (pe) of Haemophilus influenzae (strain ATCC 51907 / DSM 11121 / KW20 / Rd).